The sequence spans 508 residues: Probable ligand-gated ion channel 46 (508 aa).

The first 18 residues, 1 to 18, serve as a signal peptide directing secretion; the sequence is MQYLQFLSLVVLLLMCHA. Residues 19–274 are Extracellular-facing; sequence RKSVYRRNSP…FEFKRRAGWY (256 aa). Asn65, Asn134, Asn175, and Asn201 each carry an N-linked (GlcNAc...) asparagine glycan. Cys190 and Cys204 are disulfide-bonded. Residues 275-295 traverse the membrane as a helical segment; sequence ILQAYLPTYLTICISWISFAL. Over 296-301 the chain is Cytoplasmic; sequence GSKAIP. Residues 302 to 321 form a helical membrane-spanning segment; the sequence is ARTMLGVNSLLAMTFQFGNI. Over 322–335 the chain is Extracellular; the sequence is IRNLPRVSYVKAID. Residues 336–356 traverse the membrane as a helical segment; the sequence is VWMLSCMTFVFCSLLELAWVG. Residues 357–480 are Cytoplasmic-facing; sequence YLSREEEPTS…KQRREILAHK (124 aa). Residues 374-407 form a disordered region; the sequence is AQVAPKPCHPPPVQQNANNSSVHRRQKQPKNEEE. A helical transmembrane segment spans residues 481–501; sequence IDSVSVFMFPFLFVLFNIAYW. Over 502-508 the chain is Extracellular; it reads QHYLRGY.

Belongs to the ligand-gated ion channel (TC 1.A.9) family. As to expression, expressed in the nervous system, with high expression in cholinergic motor neurons and weak expression in GABAergic motor neurons.

Its subcellular location is the presynaptic cell membrane. The protein localises to the cell projection. It localises to the axon. The protein resides in the cytoplasmic vesicle. It is found in the secretory vesicle. Its subcellular location is the synaptic vesicle. In terms of biological role, probable component of a ligand-gated anion channel. Negatively regulates synaptic transmission and synaptic vesicle release in response to acetylcholine in cholinergic motor neurons. Role in synaptic vesicle release kinetics may be in association with the ligand-gated ion channel protein acc-4. This Caenorhabditis elegans protein is Probable ligand-gated ion channel 46.